Here is a 353-residue protein sequence, read N- to C-terminus: Protein RecA (353 aa).

73–80 contacts ATP; that stretch reads GPESSGKT.

The protein belongs to the RecA family.

It localises to the cytoplasm. Can catalyze the hydrolysis of ATP in the presence of single-stranded DNA, the ATP-dependent uptake of single-stranded DNA by duplex DNA, and the ATP-dependent hybridization of homologous single-stranded DNAs. It interacts with LexA causing its activation and leading to its autocatalytic cleavage. The chain is Protein RecA from Bordetella avium (strain 197N).